We begin with the raw amino-acid sequence, 652 residues long: MSSVSASTERKHIKFTPIQSFVESSFFTKLSELKLDEFKLDSTKKEIKGFLTHPKRLNKFNDYPTINFDYSSFDKGPDVNEDNNISWKGYIYNVNTIEEFKDIDKQAILKRWGTEIYNEIQDGSVDLSYECFNKVHVLAFCDLKKYKFYYWFAFPTLHSPWNIIGADGDSLKKFIPSIKEFVETSKFVQFFQINDGNIIERVSEFQESKIFVFIDTCLSQACTPSVQLKNYLYVLARKGFENIDLIIYRNNGNSFYWKLQLDKDKLGINEVPRISGWERLSNGKLGPRLADLGSLIDPQELAKQAVDLNLKLMKWRIAPNLDLDIIKNQRVLLLGAGTLGSYVSRALMGWGVRNITFVDNGRISYSNPVRQPLFSFKDCFSDEGQGEWKAIRAANTLKEIFPDVQSKGYNLEVPMIGHPVNNETKQKSSFDKLSDLFDDHDVVFLLMDSRESRWLPTVLGLAKNKIVLNAALGFDSFLVMRHGNISNANNDDTRVGCYYCNDVVAPNDSLSDRTLDQMCTVTRPGVALMASSLAVELFISMLQHPNKQYAEPGPSNNLILGEVPHQIRGFLHNYSQSKLQTPNYKHCSACSKYVIDKFNELGWEFVKNCLNDVTYLEETCGLLKVQQEADLASSELLKDLELSDDDDSEWLD.

A GXGXXG motif motif is present at residues 335–340 (GAGTLG). Cys-519 (glycyl thioester intermediate) is an active-site residue.

It belongs to the ATG7 family. As to quaternary structure, homodimer.

The protein resides in the cytoplasm. Its subcellular location is the preautophagosomal structure. E1-like activating enzyme involved in the 2 ubiquitin-like systems required for cytoplasm to vacuole transport (Cvt) and autophagy. Activates ATG12 for its conjugation with ATG5 and ATG8 for its conjugation with phosphatidylethanolamine. Both systems are needed for the ATG8 association to Cvt vesicles and autophagosomes membranes. Autophagy is essential for maintenance of amino acid levels and protein synthesis under nitrogen starvation. Required for selective autophagic degradation of the nucleus (nucleophagy) as well as for mitophagy which contributes to regulate mitochondrial quantity and quality by eliminating the mitochondria to a basal level to fulfill cellular energy requirements and preventing excess ROS production. Plays a role in the regulation of filamentous growth and chronological longevity. This Debaryomyces hansenii (strain ATCC 36239 / CBS 767 / BCRC 21394 / JCM 1990 / NBRC 0083 / IGC 2968) (Yeast) protein is Ubiquitin-like modifier-activating enzyme ATG7 (ATG7).